A 239-amino-acid polypeptide reads, in one-letter code: Demethylmenaquinone methyltransferase (239 aa).

Residues threonine 68, aspartate 86, and 111 to 112 each bind S-adenosyl-L-methionine; that span reads NG.

This sequence belongs to the class I-like SAM-binding methyltransferase superfamily. MenG/UbiE family.

The catalysed reaction is a 2-demethylmenaquinol + S-adenosyl-L-methionine = a menaquinol + S-adenosyl-L-homocysteine + H(+). The protein operates within quinol/quinone metabolism; menaquinone biosynthesis; menaquinol from 1,4-dihydroxy-2-naphthoate: step 2/2. In terms of biological role, methyltransferase required for the conversion of demethylmenaquinol (DMKH2) to menaquinol (MKH2). The sequence is that of Demethylmenaquinone methyltransferase from Tropheryma whipplei (strain TW08/27) (Whipple's bacillus).